The chain runs to 74 residues: Kappa-scoloptoxin(07)-Ssm2a (74 aa).

The first 19 residues, 1-19 (MLVFYALLFVTVFSNTVMG), serve as a signal peptide directing secretion. Residues 20–41 (ATIDKPIPKPILREAIEEIEVN) constitute a propeptide that is removed on maturation.

Belongs to the scoloptoxin-07 family. Contains 3 disulfide bonds. In terms of tissue distribution, expressed by the venom gland.

The protein localises to the secreted. Functionally, toxin that inhibits voltage-gated potassium channel currents in DRG neurons (IC(50)=about 570 nM). In vivo, induces neurotoxicity shown by twitching, paralysis, and body contraction. In vivo, insects injected with this toxin showed signs of neurotoxicity including twitching, paralysis, and body contraction. This chain is Kappa-scoloptoxin(07)-Ssm2a, found in Scolopendra mutilans (Chinese red-headed centipede).